A 182-amino-acid polypeptide reads, in one-letter code: Adenylate kinase (182 aa).

12-17 (GAGKGT) is an ATP binding site. The NMP stretch occupies residues 32–61 (STGDLLREEVSGGTDLGKKAELIMNKGELV). AMP is bound by residues Thr-33, Arg-38, 59–61 (ELV), 85–88 (GFPR), and Gln-92. The interval 126–132 (GRGRKDD) is LID. An ATP-binding site is contributed by Arg-127. AMP contacts are provided by Arg-129 and Arg-140. Residue Gly-168 coordinates ATP.

This sequence belongs to the adenylate kinase family. In terms of assembly, monomer.

The protein localises to the cytoplasm. The catalysed reaction is AMP + ATP = 2 ADP. It participates in purine metabolism; AMP biosynthesis via salvage pathway; AMP from ADP: step 1/1. Catalyzes the reversible transfer of the terminal phosphate group between ATP and AMP. Plays an important role in cellular energy homeostasis and in adenine nucleotide metabolism. This Prochlorococcus marinus (strain SARG / CCMP1375 / SS120) protein is Adenylate kinase.